A 112-amino-acid chain; its full sequence is T cell receptor alpha variable 41 (112 aa).

The N-terminal stretch at 1-21 (MVKIRQFLLAILWLQLSCVSA) is a signal peptide. Residues 24 to 112 (NEVEQSPQNL…DSAVYICAVR (89 aa)) enclose the Ig-like domain. Residues Asn32 and Asn44 are each glycosylated (N-linked (GlcNAc...) asparagine). Cys45 and Cys109 are joined by a disulfide.

As to quaternary structure, alpha-beta TR is a heterodimer composed of an alpha and beta chain; disulfide-linked. The alpha-beta TR is associated with the transmembrane signaling CD3 coreceptor proteins to form the TR-CD3 (TcR or TCR). The assembly of alpha-beta TR heterodimers with CD3 occurs in the endoplasmic reticulum where a single alpha-beta TR heterodimer associates with one CD3D-CD3E heterodimer, one CD3G-CD3E heterodimer and one CD247 homodimer forming a stable octameric structure. CD3D-CD3E and CD3G-CD3E heterodimers preferentially associate with TR alpha and TR beta chains, respectively. The association of the CD247 homodimer is the last step of TcR assembly in the endoplasmic reticulum and is required for transport to the cell surface.

It localises to the cell membrane. In terms of biological role, v region of the variable domain of T cell receptor (TR) alpha chain that participates in the antigen recognition. Alpha-beta T cell receptors are antigen specific receptors which are essential to the immune response and are present on the cell surface of T lymphocytes. Recognize peptide-major histocompatibility (MH) (pMH) complexes that are displayed by antigen presenting cells (APC), a prerequisite for efficient T cell adaptive immunity against pathogens. Binding of alpha-beta TR to pMH complex initiates TR-CD3 clustering on the cell surface and intracellular activation of LCK that phosphorylates the ITAM motifs of CD3G, CD3D, CD3E and CD247 enabling the recruitment of ZAP70. In turn ZAP70 phosphorylates LAT, which recruits numerous signaling molecules to form the LAT signalosome. The LAT signalosome propagates signal branching to three major signaling pathways, the calcium, the mitogen-activated protein kinase (MAPK) kinase and the nuclear factor NF-kappa-B (NF-kB) pathways, leading to the mobilization of transcription factors that are critical for gene expression and essential for T cell growth and differentiation. The T cell repertoire is generated in the thymus, by V-(D)-J rearrangement. This repertoire is then shaped by intrathymic selection events to generate a peripheral T cell pool of self-MH restricted, non-autoaggressive T cells. Post-thymic interaction of alpha-beta TR with the pMH complexes shapes TR structural and functional avidity. The sequence is that of T cell receptor alpha variable 41 from Homo sapiens (Human).